The primary structure comprises 322 residues: Probable 2-oxoglutarate-dependent dioxygenase AOP1 (322 aa).

One can recognise a Fe2OG dioxygenase domain in the interval 165–271; the sequence is TYYLTRLMKY…RYSTGLFSIP (107 aa). Positions 195, 197, and 252 each coordinate Fe cation. 2-oxoglutarate is bound at residue Arg262.

The protein belongs to the iron/ascorbate-dependent oxidoreductase family. Requires Fe(2+) as cofactor.

Functionally, probable 2-oxoglutarate-dependent dioxygenase that may be involved in glucosinolates biosynthesis. May play a role in the production of aliphatic glucosinolates. This chain is Probable 2-oxoglutarate-dependent dioxygenase AOP1 (AOP1), found in Arabidopsis thaliana (Mouse-ear cress).